The chain runs to 31 residues: Histone H1.3 (31 aa).

This sequence belongs to the histone H1/H5 family.

It is found in the nucleus. It localises to the chromosome. Histones H1 are necessary for the condensation of nucleosome chains into higher-order structures. This Triticum aestivum (Wheat) protein is Histone H1.3.